The sequence spans 70 residues: NAD(P)H-quinone oxidoreductase subunit L (70 aa).

The next 2 helical transmembrane spans lie at Ile-2–Val-22 and Leu-39–Ala-59.

Belongs to the complex I NdhL subunit family. NDH-1 can be composed of about 15 different subunits; different subcomplexes with different compositions have been identified which probably have different functions.

The protein resides in the cellular thylakoid membrane. The catalysed reaction is a plastoquinone + NADH + (n+1) H(+)(in) = a plastoquinol + NAD(+) + n H(+)(out). The enzyme catalyses a plastoquinone + NADPH + (n+1) H(+)(in) = a plastoquinol + NADP(+) + n H(+)(out). NDH-1 shuttles electrons from an unknown electron donor, via FMN and iron-sulfur (Fe-S) centers, to quinones in the respiratory and/or the photosynthetic chain. The immediate electron acceptor for the enzyme in this species is believed to be plastoquinone. Couples the redox reaction to proton translocation, and thus conserves the redox energy in a proton gradient. Cyanobacterial NDH-1 also plays a role in inorganic carbon-concentration. This Nostoc punctiforme (strain ATCC 29133 / PCC 73102) protein is NAD(P)H-quinone oxidoreductase subunit L.